Reading from the N-terminus, the 341-residue chain is Barley B recombinant-like protein A (341 aa).

Over residues 48-62 (HQHQQHVPHHHHQPH) the composition is skewed to basic residues. Disordered regions lie at residues 48–95 (HQHQ…MNFA) and 150–234 (MQQQ…RKNI). Low complexity predominate over residues 68-77 (GANGNANGGA). Positions 78–90 (MPPPPATEAPPSM) are enriched in pro residues. Residues 190–211 (PKKRQQGRQPKVPRAKKPKKSA) show a composition bias toward basic residues.

This sequence belongs to the BBR/BPC family.

Its subcellular location is the nucleus. Transcriptional regulator that specifically binds to GA-rich elements (GAGA-repeats) present in regulatory sequences of genes involved in developmental processes. The polypeptide is Barley B recombinant-like protein A (Oryza sativa subsp. japonica (Rice)).